The following is a 200-amino-acid chain: Outer-membrane lipoprotein carrier protein (200 aa).

The signal sequence occupies residues 1 to 18 (MKAVVFAMVMAVSFNVFA).

It belongs to the LolA family. Monomer.

It is found in the periplasm. Its function is as follows. Participates in the translocation of lipoproteins from the inner membrane to the outer membrane. Only forms a complex with a lipoprotein if the residue after the N-terminal Cys is not an aspartate (The Asp acts as a targeting signal to indicate that the lipoprotein should stay in the inner membrane). The chain is Outer-membrane lipoprotein carrier protein from Idiomarina loihiensis (strain ATCC BAA-735 / DSM 15497 / L2-TR).